A 965-amino-acid chain; its full sequence is Phosphatidylethanolamine N-methyltransferase (965 aa).

Residues 1 to 55 (MSSSAADPFAARLNSDVRQRHPTASATSKNVEGTSQQKQQQQQQQSEANAAASRV) form a disordered region. Residues 1–91 (MSSSAADPFA…DPREPKNLSD (91 aa)) are Lumenal-facing. Residues 22–35 (PTASATSKNVEGTS) show a composition bias toward polar residues. Positions 36–45 (QQKQQQQQQQ) are enriched in low complexity. Residues 92-112 (VAVLAIIALHFLAAYYLPWGV) traverse the membrane as a helical segment. Topologically, residues 113–115 (KRP) are cytoplasmic. The helical transmembrane segment at 116–136 (LFAAIFMFWRLAYNVGIGYLL) threads the bilayer. The Lumenal portion of the chain corresponds to 137-201 (TIQSKYKLLV…EYNTWLTFRR (65 aa)). A helical transmembrane segment spans residues 202–222 (VVDLILMCDFISYCLFAIVCA). The Cytoplasmic portion of the chain corresponds to 223 to 229 (HKPDGEG). A helical transmembrane segment spans residues 230-250 (LFMCFARWAAGITLVGFNLWV). Residues 251–279 (KLDAHRVVKDYAWYWGDFFYLIEQELTFD) lie on the Lumenal side of the membrane. Residues 280-300 (GVFELAPHPMYSIGYAGYYGI) traverse the membrane as a helical segment. Over 301 to 306 (SMMAAS) the chain is Cytoplasmic. The chain crosses the membrane as a helical span at residues 307–327 (YDVLFISIIAHAAQFAFLVIV). At 328 to 389 (ENPHIEKTYN…IGLKNLDFFR (62 aa)) the chain is on the lumenal side. Residues 390–410 (ITDVAIVLLCAYLAVVTMVTP) form a helical membrane-spanning segment. Residues 411–417 (NTRFYQA) are Cytoplasmic-facing. The helical transmembrane segment at 418–438 (LFVLHALAWRLWYSAGLGVIL) threads the bilayer. Over 439–467 (TMQSEEKMFTRHFLKYGESVGEAWRQWKG) the chain is Lumenal. The helical transmembrane segment at 468 to 488 (IYHLSNCLCHASFIAASYKMY) threads the bilayer. Over 489–496 (EFPADWTY) the chain is Cytoplasmic. A helical membrane pass occupies residues 497–517 (GWALLKHVVGLSLIALQVWTA). At 518–573 (TSIYESLGEFGWFYGDFFFDSKRQLTYTSIYRFLNNPERVFGTAGLWGAALITWSR) the chain is on the lumenal side. The chain crosses the membrane as a helical span at residues 574 to 594 (AIFLMALAGHFLTLAFLAYVE). Over 595-965 (KPHMQKVYGR…TTPVDSKFSE (371 aa)) the chain is Cytoplasmic.

It belongs to the class VI-like SAM-binding methyltransferase superfamily. CHO2 family.

Its subcellular location is the endoplasmic reticulum membrane. The catalysed reaction is a 1,2-diacyl-sn-glycero-3-phosphoethanolamine + S-adenosyl-L-methionine = a 1,2-diacyl-sn-glycero-3-phospho-N-methylethanolamine + S-adenosyl-L-homocysteine + H(+). Its pathway is phospholipid metabolism; phosphatidylcholine biosynthesis. In terms of biological role, catalyzes the first step of the methylation pathway of phosphatidylcholine biosynthesis, the SAM-dependent methylation of phosphatidylethanolamine (PE) to phosphatidylmonomethylethanolamine (PMME). The chain is Phosphatidylethanolamine N-methyltransferase from Neurospora crassa (strain ATCC 24698 / 74-OR23-1A / CBS 708.71 / DSM 1257 / FGSC 987).